The sequence spans 489 residues: Dipeptide and tripeptide permease B (489 aa).

Over 1-27 (MNKPASIGLLQQPKPFFMIFFVELWER) the chain is Cytoplasmic. A helical transmembrane segment spans residues 28-48 (FGYYGVQGILAVYFVHKLGFS). Topologically, residues 49-52 (QEQA) are periplasmic. Residues 53-73 (FTTFGAFAALVYGLIAIGGYV) traverse the membrane as a helical segment. Residues 74 to 82 (GDHLLGTKR) lie on the Cytoplasmic side of the membrane. The helical transmembrane segment at 83 to 103 (TIVLGAIVLTVGYFMTGLSIL) threads the bilayer. At 104 to 106 (KPE) the chain is on the periplasmic side. The helical transmembrane segment at 107–127 (LIFYALGTIAVGNGLFKANPA) threads the bilayer. At 128–146 (SLLSKCYPPKDPRLDGAFT) the chain is on the cytoplasmic side. Residues 147–167 (LFYMSINIGSLFSLAIAPVIA) traverse the membrane as a helical segment. Over 168 to 171 (EKFG) the chain is Periplasmic. The chain crosses the membrane as a helical span at residues 172–192 (YAVTYNICGIGLIIALLVYVL). Residues 193-212 (YRNTVRNIGSEPDHRPINYK) lie on the Cytoplasmic side of the membrane. A run of 2 helical transmembrane segments spans residues 213-233 (NLLL…WLMH) and 234-254 (NVKI…FIFF). Over 255-267 (REAFKQDKVGRNK) the chain is Cytoplasmic. Residues 268–288 (MFVAFILMLQAIVFFILYAQM) traverse the membrane as a helical segment. The Periplasmic segment spans residues 289–311 (PTSLNFFAINNVHHQLLGFNINP). A helical membrane pass occupies residues 312-332 (VSFQALNPFWIVVASPILAAL). Over 333 to 350 (YTHWGSRSKDLTMPAKFT) the chain is Cytoplasmic. A helical transmembrane segment spans residues 351-371 (VGMFLCSLGFLTAAAAGLWFA). The Periplasmic portion of the chain corresponds to 372-375 (DEQG). A helical membrane pass occupies residues 376-396 (LTSPWFIVLVYLFQSLGELMI). Topologically, residues 397-419 (SALGLAMVAALVPQYLMGFILGM) are cytoplasmic. The chain crosses the membrane as a helical span at residues 420-440 (WYLTQATSFLLGGYVAAFTAI). Residues 441 to 456 (PEGITDPLETLPVYTN) lie on the Periplasmic side of the membrane. The chain crosses the membrane as a helical span at residues 457-477 (VFGKIGITTFIVAIIMAITVP). The Cytoplasmic segment spans residues 478–489 (LLNRMMNGKQKA).

It belongs to the major facilitator superfamily. Proton-dependent oligopeptide transporter (POT/PTR) (TC 2.A.17) family. DtpB subfamily.

The protein resides in the cell inner membrane. Functionally, proton-dependent permease that transports di- and tripeptides. The sequence is that of Dipeptide and tripeptide permease B from Photorhabdus asymbiotica subsp. asymbiotica (strain ATCC 43949 / 3105-77) (Xenorhabdus luminescens (strain 2)).